A 637-amino-acid chain; its full sequence is Glutathione hydrolase 3 (637 aa).

The helical transmembrane segment at leucine 28–serine 48 threads the bilayer. Asparagine 50 carries an N-linked (GlcNAc...) asparagine glycan. Arginine 147 provides a ligand contact to L-glutamate. Asparagine 271, asparagine 374, and asparagine 398 each carry an N-linked (GlcNAc...) asparagine glycan. The Nucleophile role is filled by threonine 418. L-glutamate-binding positions include threonine 436, asparagine 438, glutamate 457, aspartate 460, serine 488–serine 489, and glycine 509–glycine 510. Residue asparagine 553 is glycosylated (N-linked (GlcNAc...) asparagine).

It belongs to the gamma-glutamyltransferase family. Expressed in roots, cotyledons, leaves, flowers and siliques.

Its subcellular location is the vacuole membrane. The enzyme catalyses an N-terminal (5-L-glutamyl)-[peptide] + an alpha-amino acid = 5-L-glutamyl amino acid + an N-terminal L-alpha-aminoacyl-[peptide]. The catalysed reaction is glutathione + H2O = L-cysteinylglycine + L-glutamate. It carries out the reaction an S-substituted glutathione + H2O = an S-substituted L-cysteinylglycine + L-glutamate. The protein operates within sulfur metabolism; glutathione metabolism. Its function is as follows. May play a role in protecting plants from some xenobiotic chemicals by degrading vacuolar glutathione conjugates into cysteine conjugates. This is Glutathione hydrolase 3 (GGT3) from Arabidopsis thaliana (Mouse-ear cress).